The sequence spans 464 residues: Arginine biosynthesis bifunctional protein ArgJ, chloroplastic (464 aa).

Positions 208, 234, 245, 332, 459, and 464 each coordinate substrate. Thr-245 serves as the catalytic Nucleophile.

This sequence belongs to the ArgJ family. Heterodimer of an alpha and a beta chain.

The protein localises to the plastid. Its subcellular location is the chloroplast. It catalyses the reaction N(2)-acetyl-L-ornithine + L-glutamate = N-acetyl-L-glutamate + L-ornithine. The catalysed reaction is L-glutamate + acetyl-CoA = N-acetyl-L-glutamate + CoA + H(+). The protein operates within amino-acid biosynthesis; L-arginine biosynthesis; L-ornithine and N-acetyl-L-glutamate from L-glutamate and N(2)-acetyl-L-ornithine (cyclic): step 1/1. Its pathway is amino-acid biosynthesis; L-arginine biosynthesis; N(2)-acetyl-L-ornithine from L-glutamate: step 1/4. Functionally, catalyzes two activities which are involved in the cyclic version of arginine biosynthesis: the synthesis of acetylglutamate from glutamate and acetyl-CoA, and of ornithine by transacetylation between acetylornithine and glutamate. The sequence is that of Arginine biosynthesis bifunctional protein ArgJ, chloroplastic from Zea mays (Maize).